Consider the following 88-residue polypeptide: Large ribosomal subunit protein bL31B (88 aa).

Belongs to the bacterial ribosomal protein bL31 family. Type B subfamily. In terms of assembly, part of the 50S ribosomal subunit.

This Paraburkholderia xenovorans (strain LB400) protein is Large ribosomal subunit protein bL31B.